The chain runs to 173 residues: MATRAWVAAAVALNPQLLPLRSCSPTKSVSPAQRSASMGLRLRSGRPCLGKFVCRRAKNAGYEDYKFPDPIPEFAEQETSKFREHMAWRLEQKKEDYFGDHVEEIVDVCTEIMGTFLENDYRGPGTLLVHPFLDMKGEIKERGLPGAPQAARAAIAWAEKNVDKDWKAWTGEY.

A chloroplast-targeting transit peptide spans 1-55; sequence MATRAWVAAAVALNPQLLPLRSCSPTKSVSPAQRSASMGLRLRSGRPCLGKFVCR.

It is found in the plastid. The protein localises to the chloroplast stroma. The protein resides in the chloroplast nucleoid. Required for the activity of the plastid-encoded RNA polymerase (PEP) and full expression of genes transcribed by PEP. The protein is Protein PLASTID REDOX INSENSITIVE 2, chloroplastic of Zea mays (Maize).